A 443-amino-acid polypeptide reads, in one-letter code: ATP-dependent protease ATPase subunit HslU (443 aa).

ATP contacts are provided by residues I19 and 61–66 (GVGKTE). The segment at 139–158 (PPRDIGFSQPEEKDSNTRQV) is disordered. The ATP site is built by D256, E321, and R393.

This sequence belongs to the ClpX chaperone family. HslU subfamily. In terms of assembly, a double ring-shaped homohexamer of HslV is capped on each side by a ring-shaped HslU homohexamer. The assembly of the HslU/HslV complex is dependent on binding of ATP.

Its subcellular location is the cytoplasm. ATPase subunit of a proteasome-like degradation complex; this subunit has chaperone activity. The binding of ATP and its subsequent hydrolysis by HslU are essential for unfolding of protein substrates subsequently hydrolyzed by HslV. HslU recognizes the N-terminal part of its protein substrates and unfolds these before they are guided to HslV for hydrolysis. The chain is ATP-dependent protease ATPase subunit HslU from Cupriavidus taiwanensis (strain DSM 17343 / BCRC 17206 / CCUG 44338 / CIP 107171 / LMG 19424 / R1) (Ralstonia taiwanensis (strain LMG 19424)).